We begin with the raw amino-acid sequence, 269 residues long: Myelin protein zero-like protein 1 (269 aa).

A signal peptide spans 1–35 (MAASAGAGAVIAAPDSRRWLWSVLAAALGLLTAGV). Residues 36-146 (SALEVYTPKE…VKNPPDIVVQ (111 aa)) enclose the Ig-like V-type domain. Residues 36-162 (SALEVYTPKE…YVVEKENLPV (127 aa)) lie on the Extracellular side of the membrane. Residues Asn50 and Asn130 are each glycosylated (N-linked (GlcNAc...) asparagine). A disulfide bond links Cys58 and Cys135. Residues 163–183 (FPVWVVVGIVTAVVLGLTLLI) traverse the membrane as a helical segment. The Cytoplasmic portion of the chain corresponds to 184-269 (SMILAVLYRR…SVVYADIRKN (86 aa)). The segment at 199 to 238 (DYTGCSTSESLSPVKQAPRKSPSDTEGLVKSLPSGSHQGP) is disordered. Polar residues predominate over residues 202–211 (GCSTSESLSP). Residues Ser204, Ser206, Ser208, Ser210, Ser219, and Ser221 each carry the phosphoserine modification. The short motif at 239–244 (VIYAQL) is the ITIM motif 1 element. Tyr241 is modified (phosphotyrosine). Phosphoserine is present on Ser260. Positions 261 to 266 (VVYADI) match the ITIM motif 2 motif. Tyr263 carries the post-translational modification Phosphotyrosine.

The protein belongs to the myelin P0 protein family. Interacts with phosphorylated PTPN11/SHP-2. Post-translationally, phosphorylated on tyrosine residues upon stimulation with pervanadate and concanavalin-A (ConA). Phosphorylation at Tyr-241 and Tyr-263 is required for interaction with PTPN11/SHP-2. Dephosphorylated by PTPN11/SHP-2 (in vitro). N-glycosylated. N-glycosylation is required for concanavalin A binding. Widely expressed with highest levels in heart, placenta, kidney and pancreas. Isoform 3 is relatively abundant in hematopoietic tissues and fetal liver. Isoform 1 and isoform 3 are expressed in CD14- PB monocytes and pre-B cell progenitors. Isoform 3 appears to be the major isoform in CD34- promyelocytic and promonocytic cells. During differentiation in monocytic cells, the expression level of isoform 3 decreases and that of isoform 1 increases. Isoform 1 is prominent in stromal cells and, to a lesser extent, in umbilical vein endothelial cells and erythroid progenitors. Isoform 2 is expressed in a erythroid progenitor cell line.

It is found in the membrane. Its function is as follows. Cell surface receptor, which is involved in signal transduction processes. Recruits PTPN11/SHP-2 to the cell membrane and is a putative substrate of PTPN11/SHP-2. Is a major receptor for concanavalin-A (ConA) and is involved in cellular signaling induced by ConA, which probably includes Src family tyrosine-protein kinases. Isoform 3 seems to have a dominant negative role; it blocks tyrosine phosphorylation of MPZL1 induced by ConA. Isoform 1, but not isoform 2 and isoform 3, may be involved in regulation of integrin-mediated cell motility. This is Myelin protein zero-like protein 1 (MPZL1) from Homo sapiens (Human).